The following is a 113-amino-acid chain: Protein crumbs homolog 3 (113 aa).

The first 24 residues, 1–24, serve as a signal peptide directing secretion; sequence MATPGLGVLLAFGLPMLPSGWSLT. The disordered stretch occupies residues 23-44; that stretch reads LTAPDPFTNSTTQPPGDESNGG. The Extracellular portion of the chain corresponds to 25–49; that stretch reads APDPFTNSTTQPPGDESNGGLSSGA. An N-linked (GlcNAc...) asparagine glycan is attached at Asn31. The helical transmembrane segment at 50-70 threads the bilayer; it reads IVAITVVFSILGVLLIAVGLF. Topologically, residues 71-113 are cytoplasmic; sequence LLMRKLREKRQTEGTYRPSSEEQVGARAPPPPNLKLPPEERLI. Positions 77–113 are interaction with EPB41L5; the sequence is REKRQTEGTYRPSSEEQVGARAPPPPNLKLPPEERLI. The segment at 80–113 is disordered; that stretch reads RQTEGTYRPSSEEQVGARAPPPPNLKLPPEERLI. A compositionally biased stretch (polar residues) spans 83-92; that stretch reads EGTYRPSSEE. Positions 110–113 match the PDZ-binding motif; sequence ERLI.

In terms of assembly, component of a complex composed of CRB3, PALS1 and PATJ. Interacts (via C-terminus) with PALS1 (via PDZ domain). Interacts with PARD6A. Interacts (via intracellular domain) with EPB41L5. Interacts with WDR83. In terms of tissue distribution, expressed in the apical renal tubules (at protein level). Expressed in the retinal pigment epithelium.

It localises to the apical cell membrane. The protein resides in the cell junction. Its subcellular location is the tight junction. Functionally, involved in the establishment of cell polarity in mammalian epithelial cells. Regulates the morphogenesis of tight junctions. Involved in promoting phosphorylation and cytoplasmic retention of transcriptional coactivators YAP1 and WWTR1/TAZ which leads to suppression of TGFB1-dependent transcription of target genes such as CCN2/CTGF, SERPINE1/PAI1, SNAI1/SNAIL1 and SMAD7. This is Protein crumbs homolog 3 (Crb3) from Mus musculus (Mouse).